A 290-amino-acid chain; its full sequence is Pyridoxal kinase PdxY (290 aa).

Substrate is bound by residues S12 and 47–48 (TQ). Residues D114, E151, K184, and 211-214 (RPLL) each bind ATP. Substrate is bound at residue D225.

Belongs to the pyridoxine kinase family. PdxY subfamily. As to quaternary structure, homodimer. Mg(2+) is required as a cofactor.

The catalysed reaction is pyridoxal + ATP = pyridoxal 5'-phosphate + ADP + H(+). Its pathway is cofactor metabolism; pyridoxal 5'-phosphate salvage; pyridoxal 5'-phosphate from pyridoxal: step 1/1. Pyridoxal kinase involved in the salvage pathway of pyridoxal 5'-phosphate (PLP). Catalyzes the phosphorylation of pyridoxal to PLP. In Pseudomonas putida (strain ATCC 47054 / DSM 6125 / CFBP 8728 / NCIMB 11950 / KT2440), this protein is Pyridoxal kinase PdxY.